Consider the following 509-residue polypeptide: Bifunctional purine biosynthesis protein PurH (509 aa).

Positions methionine 1–valine 146 constitute an MGS-like domain.

Belongs to the PurH family.

The enzyme catalyses (6R)-10-formyltetrahydrofolate + 5-amino-1-(5-phospho-beta-D-ribosyl)imidazole-4-carboxamide = 5-formamido-1-(5-phospho-D-ribosyl)imidazole-4-carboxamide + (6S)-5,6,7,8-tetrahydrofolate. It carries out the reaction IMP + H2O = 5-formamido-1-(5-phospho-D-ribosyl)imidazole-4-carboxamide. It functions in the pathway purine metabolism; IMP biosynthesis via de novo pathway; 5-formamido-1-(5-phospho-D-ribosyl)imidazole-4-carboxamide from 5-amino-1-(5-phospho-D-ribosyl)imidazole-4-carboxamide (10-formyl THF route): step 1/1. It participates in purine metabolism; IMP biosynthesis via de novo pathway; IMP from 5-formamido-1-(5-phospho-D-ribosyl)imidazole-4-carboxamide: step 1/1. This is Bifunctional purine biosynthesis protein PurH from Natranaerobius thermophilus (strain ATCC BAA-1301 / DSM 18059 / JW/NM-WN-LF).